Here is a 278-residue protein sequence, read N- to C-terminus: UPF0276 protein Shew_2240 (278 aa).

It belongs to the UPF0276 family.

This chain is UPF0276 protein Shew_2240, found in Shewanella loihica (strain ATCC BAA-1088 / PV-4).